We begin with the raw amino-acid sequence, 345 residues long: N-acetyl-gamma-glutamyl-phosphate reductase (345 aa).

The active site involves cysteine 149.

It belongs to the NAGSA dehydrogenase family. Type 1 subfamily.

It localises to the cytoplasm. The enzyme catalyses N-acetyl-L-glutamate 5-semialdehyde + phosphate + NADP(+) = N-acetyl-L-glutamyl 5-phosphate + NADPH + H(+). The protein operates within amino-acid biosynthesis; L-arginine biosynthesis; N(2)-acetyl-L-ornithine from L-glutamate: step 3/4. Its function is as follows. Catalyzes the NADPH-dependent reduction of N-acetyl-5-glutamyl phosphate to yield N-acetyl-L-glutamate 5-semialdehyde. In Bacillus cereus (strain B4264), this protein is N-acetyl-gamma-glutamyl-phosphate reductase.